A 293-amino-acid chain; its full sequence is SAGA-associated factor 29 (293 aa).

Residues 3 to 88 (LVSADSRIAE…KALDKIAEIK (86 aa)) adopt a coiled-coil conformation. One can recognise an SGF29 C-terminal domain in the interval 152-293 (GDYVARPGDK…VVACKEPKKK (142 aa)). 2 histone H3K4me3 N-terminus binding regions span residues 194–196 (DID) and 240–243 (QTTC). Residues 264–266 (FED) form a histone H3K4me3 binding region. The residue at position 288 (lysine 288) is an N6-acetyllysine.

Belongs to the SGF29 family. In terms of assembly, interacts with dimethylated and trimethylated 'Lys-4' of histone H3 (H3K4me2 and H3K4me3), with a preference for the trimethylated form (H3K4me3). Component of some SAGA-type complexes. Component of the ADA2A-containing complex (ATAC), composed of KAT14, KAT2A, TADA2L, TADA3L, ZZ3, MBIP, WDR5, YEATS2, CCDC101 and DR1. Interacts with (methylated) CGAS. Interacts with TADA3L, GCN5L2, SUPT3H and MYC.

Its subcellular location is the nucleus. Its function is as follows. Chromatin reader component of some histone acetyltransferase (HAT) SAGA-type complexes like the TFTC-HAT, ATAC or STAGA complexes. SGF29 specifically recognizes and binds methylated 'Lys-4' of histone H3 (H3K4me), with a preference for trimethylated form (H3K4me3). In the SAGA-type complexes, SGF29 is required to recruit complexes to H3K4me. Involved in the response to endoplasmic reticulum (ER) stress by recruiting the SAGA complex to H3K4me, thereby promoting histone H3 acetylation and cell survival. Also binds non-histone proteins that are methylated on Lys residues: specifically recognizes and binds CGAS monomethylated on 'Lys-506'. The protein is SAGA-associated factor 29 of Homo sapiens (Human).